The chain runs to 372 residues: Glutamate 5-kinase (372 aa).

K14 contributes to the ATP binding site. 3 residues coordinate substrate: S54, D141, and N153. ATP contacts are provided by residues 173–174 and 215–221; these read TD and SGGMLTK. The PUA domain occupies 280 to 358; the sequence is AGKVVVDEGA…HEIEHILGYI (79 aa).

The protein belongs to the glutamate 5-kinase family.

The protein localises to the cytoplasm. It carries out the reaction L-glutamate + ATP = L-glutamyl 5-phosphate + ADP. It functions in the pathway amino-acid biosynthesis; L-proline biosynthesis; L-glutamate 5-semialdehyde from L-glutamate: step 1/2. Catalyzes the transfer of a phosphate group to glutamate to form L-glutamate 5-phosphate. This chain is Glutamate 5-kinase, found in Methylobacillus flagellatus (strain ATCC 51484 / DSM 6875 / VKM B-1610 / KT).